We begin with the raw amino-acid sequence, 445 residues long: mRNA cleavage and polyadenylation factor CLP1 (445 aa).

ATP contacts are provided by residues Glu-33 and 131 to 136 (SSGKTS).

Belongs to the Clp1 family. Clp1 subfamily. In terms of assembly, component of a pre-mRNA cleavage factor complex. Interacts directly with PCF11.

The protein resides in the nucleus. Required for endonucleolytic cleavage during polyadenylation-dependent pre-mRNA 3'-end formation. This chain is mRNA cleavage and polyadenylation factor CLP1, found in Eremothecium gossypii (strain ATCC 10895 / CBS 109.51 / FGSC 9923 / NRRL Y-1056) (Yeast).